A 418-amino-acid chain; its full sequence is D-inositol 3-phosphate glycosyltransferase (418 aa).

Residue H9 participates in 1D-myo-inositol 3-phosphate binding. UDP-N-acetyl-alpha-D-glucosamine is bound by residues 15–16 (QP) and G23. Residues 20–25 (DSGGMN), K78, Y110, T134, and R154 each bind 1D-myo-inositol 3-phosphate. UDP-N-acetyl-alpha-D-glucosamine contacts are provided by R231, K236, and R294. 3 residues coordinate Mg(2+): Y303, R304, and A306. Residues E316 and E324 each coordinate UDP-N-acetyl-alpha-D-glucosamine. T330 contacts Mg(2+).

Belongs to the glycosyltransferase group 1 family. MshA subfamily. Homodimer.

It catalyses the reaction 1D-myo-inositol 3-phosphate + UDP-N-acetyl-alpha-D-glucosamine = 1D-myo-inositol 2-acetamido-2-deoxy-alpha-D-glucopyranoside 3-phosphate + UDP + H(+). Its function is as follows. Catalyzes the transfer of a N-acetyl-glucosamine moiety to 1D-myo-inositol 3-phosphate to produce 1D-myo-inositol 2-acetamido-2-deoxy-glucopyranoside 3-phosphate in the mycothiol biosynthesis pathway. The polypeptide is D-inositol 3-phosphate glycosyltransferase (Corynebacterium glutamicum (strain R)).